Consider the following 663-residue polypeptide: MIDKRDFKAFKLVSKYAPSGDQPQAIEALVDNIESGEKAQILLGATGTGKTYTMSQVISKVNKPTLVIAHNKTLAGQLYGEFKEFFPENAVEYFVSYYDYYQPEAYVPSSDTYIEKDSSVNDEIDKLRHSATSSLLERNDVIVVASVSCIYGLGSPKEYADSAVSLRPGQEISRDQLLNALVDIQFERNDIDFQRGRFRVRGDVVEVFPASRDEHAFRIEFFGDEIDRIREIESLTGKVLGDADHLVLFPATHFVTNDEHMEQSISKIQAELADQLKLFEAEGKLLEAQRLRQRTEYDIEMLREMGYTNGVENYSRHMDGRSAGEPPYTLLDFFPEDFLIMIDESHMTMGQIKGMYNGDKARKQMLVDYGFRLPSALDNRPLRREEFESHVHQIVYVSATPGDYEMEQTDTIVEQIIRPTGLLDPEVEVRPSMGQMDDLLGEINLRVERGERTFITTLTKKMAEDLTDYLKEMGVKVKYMHSDIKTLERTEIIRDLRLGVFDVLIGINLLREGIDVPEVSLVAILDADKEGFLRNERGLIQTIGRAARNADGHVIMYADRMTDSMQRAIDETARRRAIQMAYNEEHGIIPQTIKKDIRDLISISRAVEAKATEAETNYESMTRSERQEAIKQLQKNMQEAAELLDFELAAQLRDLILELKAID.

The Helicase ATP-binding domain occupies 31–271 (DNIESGEKAQ…EQSISKIQAE (241 aa)). An ATP-binding site is contributed by 44–51 (GATGTGKT). Residues 97–120 (YYDYYQPEAYVPSSDTYIEKDSSV) carry the Beta-hairpin motif. The region spanning 435–601 (QMDDLLGEIN…TIKKDIRDLI (167 aa)) is the Helicase C-terminal domain. The UVR domain occupies 627–662 (QEAIKQLQKNMQEAAELLDFELAAQLRDLILELKAI).

It belongs to the UvrB family. As to quaternary structure, forms a heterotetramer with UvrA during the search for lesions. Interacts with UvrC in an incision complex.

It localises to the cytoplasm. Its function is as follows. The UvrABC repair system catalyzes the recognition and processing of DNA lesions. A damage recognition complex composed of 2 UvrA and 2 UvrB subunits scans DNA for abnormalities. Upon binding of the UvrA(2)B(2) complex to a putative damaged site, the DNA wraps around one UvrB monomer. DNA wrap is dependent on ATP binding by UvrB and probably causes local melting of the DNA helix, facilitating insertion of UvrB beta-hairpin between the DNA strands. Then UvrB probes one DNA strand for the presence of a lesion. If a lesion is found the UvrA subunits dissociate and the UvrB-DNA preincision complex is formed. This complex is subsequently bound by UvrC and the second UvrB is released. If no lesion is found, the DNA wraps around the other UvrB subunit that will check the other stand for damage. The sequence is that of UvrABC system protein B from Streptococcus equi subsp. zooepidemicus (strain MGCS10565).